The sequence spans 51 residues: MAQTFQEKQQSRRIKMSTGNFFSRMWNAVVFGFGAAIGASVANAALGACCG.

Residues Asn-20 to Ala-42 form a helical membrane-spanning segment.

It is found in the membrane. This is an uncharacterized protein from Schizosaccharomyces pombe (strain 972 / ATCC 24843) (Fission yeast).